We begin with the raw amino-acid sequence, 295 residues long: 33 kDa chaperonin (295 aa).

2 disulfide bridges follow: Cys-237/Cys-239 and Cys-270/Cys-273.

This sequence belongs to the HSP33 family. In terms of processing, under oxidizing conditions two disulfide bonds are formed involving the reactive cysteines. Under reducing conditions zinc is bound to the reactive cysteines and the protein is inactive.

The protein resides in the cytoplasm. Functionally, redox regulated molecular chaperone. Protects both thermally unfolding and oxidatively damaged proteins from irreversible aggregation. Plays an important role in the bacterial defense system toward oxidative stress. This is 33 kDa chaperonin from Geobacillus sp. (strain WCH70).